Consider the following 403-residue polypeptide: Renin (403 aa).

The signal sequence occupies residues 1–22 (MARCRMPRWGLLLVLWGSCTFG). Positions 23–65 (LPADTGAFRRIFLKKMPSIRESLKERGVDVAGLGAEWNQFTKR) are cleaved as a propeptide — activation peptide. N-linked (GlcNAc...) asparagine glycosylation occurs at Asn70. Positions 85-400 (YYGEIGIGTP…DRHNNRIGFA (316 aa)) constitute a Peptidase A1 domain. The active site involves Asp103. A disulfide bond links Cys116 and Cys123. Asn140 is a glycosylation site (N-linked (GlcNAc...) asparagine). Cys279 and Cys283 form a disulfide bridge. Asp288 is a catalytic residue. A disulfide bond links Cys322 and Cys359.

It belongs to the peptidase A1 family. In terms of assembly, interacts with ATP6AP2.

The protein localises to the secreted. Its subcellular location is the membrane. It catalyses the reaction Cleavage of Leu-|-Xaa bond in angiotensinogen to generate angiotensin I.. Its activity is regulated as follows. Interaction with ATP6AP2 results in a 5-fold increased efficiency in angiotensinogen processing. Functionally, renin is a highly specific endopeptidase, whose only known function is to generate angiotensin I from angiotensinogen in the plasma, initiating a cascade of reactions that produce an elevation of blood pressure and increased sodium retention by the kidney. In Canis lupus familiaris (Dog), this protein is Renin (REN).